The chain runs to 280 residues: Virginiamycin B lyase (280 aa).

His215 is a substrate binding site. Glu254 serves as a coordination point for Mg(2+). His256 (proton acceptor) is an active-site residue. Glu271 serves as a coordination point for Mg(2+).

The protein belongs to the Vgb family. In terms of assembly, monomer. The cofactor is Mg(2+).

In terms of biological role, inactivates the type B streptogramin antibiotics by linearizing the lactone ring at the ester linkage, generating a free phenylglycine carboxylate and converting the threonyl moiety into 2-amino-butenoic acid. This is Virginiamycin B lyase from Mycobacterium sp. (strain JLS).